Consider the following 197-residue polypeptide: Nucleoside triphosphate pyrophosphatase (197 aa).

Aspartate 71 serves as the catalytic Proton acceptor.

It belongs to the Maf family. Requires a divalent metal cation as cofactor.

Its subcellular location is the cytoplasm. The enzyme catalyses a ribonucleoside 5'-triphosphate + H2O = a ribonucleoside 5'-phosphate + diphosphate + H(+). The catalysed reaction is a 2'-deoxyribonucleoside 5'-triphosphate + H2O = a 2'-deoxyribonucleoside 5'-phosphate + diphosphate + H(+). Functionally, nucleoside triphosphate pyrophosphatase. May have a dual role in cell division arrest and in preventing the incorporation of modified nucleotides into cellular nucleic acids. The sequence is that of Nucleoside triphosphate pyrophosphatase from Synechococcus sp. (strain JA-3-3Ab) (Cyanobacteria bacterium Yellowstone A-Prime).